A 433-amino-acid polypeptide reads, in one-letter code: Cell division control protein KAR1 (433 aa).

3 disordered regions span residues 1–38 (MNVT…SINL), 69–101 (TKNI…FYNG), and 207–227 (KPLP…TLQR). Thr233 carries the phosphothreonine modification.

In terms of assembly, interacts with SPC72.

Its subcellular location is the cytoplasm. The protein resides in the cytoskeleton. It is found in the microtubule organizing center. The protein localises to the spindle pole body. KAR1 is required for function of both intranuclear and extranuclear microtubules. KAR1 helps localize CDC31 to the spindle pole body (SPB), CDC31 then initiates SPB duplication via interaction with a downstream effector. This is Cell division control protein KAR1 (KAR1) from Saccharomyces cerevisiae (strain ATCC 204508 / S288c) (Baker's yeast).